A 530-amino-acid polypeptide reads, in one-letter code: Portal protein (530 aa).

It belongs to the siphoviridae portal protein family. As to quaternary structure, homododecamer. Interacts with the terminase complex composed of two small and one large terminase subunits. In terms of processing, proteolytically cleaved by the viral protease during capsid maturation.

The protein resides in the virion. Functionally, forms the portal vertex of the capsid. This portal plays critical roles in head assembly, genome packaging, neck/tail attachment, and genome ejection. The portal protein multimerizes as a single ring-shaped homododecamer arranged around a central channel. Binds to the terminase subunits to form the packaging machine. The sequence is that of Portal protein from Escherichia phage N15 (Bacteriophage N15).